The following is a 334-amino-acid chain: Cathepsin L2 (334 aa).

A signal peptide spans 1-17 (MNLSLVLAAFCLGIASA). Positions 18 to 113 (VPKFDQNLDT…KVFREPLFLD (96 aa)) are cleaved as a propeptide — activation peptide. 2 cysteine pairs are disulfide-bonded: C135/C178 and C169/C211. C138 is an active-site residue. A glycan (N-linked (GlcNAc...) asparagine) is linked at N221. Residues C270 and C323 are joined by a disulfide bond. H277 is an active-site residue. N-linked (GlcNAc...) asparagine glycosylation occurs at N292. N301 is an active-site residue.

It belongs to the peptidase C1 family. As to expression, predominantly expressed in the thymus and testis. Also expressed in corneal epithelium, and to a lesser extent in conjunctival epithelium and skin.

Its subcellular location is the lysosome. It catalyses the reaction The recombinant enzyme hydrolyzes proteins (serum albumin, collagen) and synthetic substrates (Z-Phe-Arg-NHMec &gt; Z-Leu-Arg-NHMec &gt; Z-Val-Arg-NHMec).. Inhibited by CST6. In terms of biological role, cysteine protease. May have an important role in corneal physiology. The sequence is that of Cathepsin L2 (CTSV) from Homo sapiens (Human).